The chain runs to 352 residues: Protein RecA (352 aa).

67–74 contributes to the ATP binding site; the sequence is GPESSGKT. Residues 332–352 are disordered; the sequence is VKPADAESKEDSPKLKAVDGF. Over residues 335-352 the composition is skewed to basic and acidic residues; sequence ADAESKEDSPKLKAVDGF.

It belongs to the RecA family.

It is found in the cytoplasm. In terms of biological role, can catalyze the hydrolysis of ATP in the presence of single-stranded DNA, the ATP-dependent uptake of single-stranded DNA by duplex DNA, and the ATP-dependent hybridization of homologous single-stranded DNAs. It interacts with LexA causing its activation and leading to its autocatalytic cleavage. The sequence is that of Protein RecA from Pseudarthrobacter chlorophenolicus (strain ATCC 700700 / DSM 12829 / CIP 107037 / JCM 12360 / KCTC 9906 / NCIMB 13794 / A6) (Arthrobacter chlorophenolicus).